A 318-amino-acid polypeptide reads, in one-letter code: tRNA uridine(34) hydroxylase (318 aa).

The Rhodanese domain occupies 125 to 219; sequence QDPNTVVIDA…YGTSKDTEGK (95 aa). Residue Cys179 is the Cysteine persulfide intermediate of the active site.

This sequence belongs to the TrhO family.

The enzyme catalyses uridine(34) in tRNA + AH2 + O2 = 5-hydroxyuridine(34) in tRNA + A + H2O. Catalyzes oxygen-dependent 5-hydroxyuridine (ho5U) modification at position 34 in tRNAs. In Acholeplasma laidlawii (strain PG-8A), this protein is tRNA uridine(34) hydroxylase.